A 500-amino-acid polypeptide reads, in one-letter code: Maintenance of mitochondrial morphology protein 1 (500 aa).

The Lumenal portion of the chain corresponds to 1 to 42; that stretch reads MATQVATPLSPSYTSELIIVCHHVLQHSPTPLTPHSLSFTQG. A helical membrane pass occupies residues 43–63; that stretch reads FLLGQLSIALLIFFFIKFFIF. The Cytoplasmic portion of the chain corresponds to 64 to 500; that stretch reads GEPPSADDRS…PGALAPGTFR (437 aa). Residues 141 to 375 enclose the SMP-LTD domain; sequence QPESLDWFNV…EPRFQQIVLP (235 aa). Composition is skewed to low complexity over residues 283–294 and 302–316; these read SSSPPSTSTTTP and NSTT…HRPT. Disordered stretches follow at residues 283-316 and 406-500; these read SSSP…HRPT and EEEE…GTFR. Acidic residues predominate over residues 406–415; the sequence is EEEEEEEEDG. Residues 438 to 471 are compositionally biased toward basic and acidic residues; that stretch reads EGAKLREAEIRAGVRKQERPGMSRAQTSREEGVR.

It belongs to the MMM1 family. Homodimer. Component of the ER-mitochondria encounter structure (ERMES) or MDM complex, composed of MMM1, MDM10, MDM12 and MDM34. An MMM1 homodimer associates with one molecule of MDM12 on each side in a pairwise head-to-tail manner, and the SMP-LTD domains of MMM1 and MDM12 generate a continuous hydrophobic tunnel for phospholipid trafficking.

It is found in the endoplasmic reticulum membrane. Its function is as follows. Component of the ERMES/MDM complex, which serves as a molecular tether to connect the endoplasmic reticulum (ER) and mitochondria. Components of this complex are involved in the control of mitochondrial shape and protein biogenesis, and function in nonvesicular lipid trafficking between the ER and mitochondria. The MDM12-MMM1 subcomplex functions in the major beta-barrel assembly pathway that is responsible for biogenesis of all outer membrane beta-barrel proteins, and acts in a late step after the SAM complex. The MDM10-MDM12-MMM1 subcomplex further acts in the TOM40-specific pathway after the action of the MDM12-MMM1 complex. Essential for establishing and maintaining the structure of mitochondria and maintenance of mtDNA nucleoids. The protein is Maintenance of mitochondrial morphology protein 1 of Phaeosphaeria nodorum (strain SN15 / ATCC MYA-4574 / FGSC 10173) (Glume blotch fungus).